A 252-amino-acid polypeptide reads, in one-letter code: MNMIQRFMQSMAKTRGLCHPDCVKASSEQEDYDASQLSIWWIMLGRKTTREKWMNQALSSLSKTCISIWWKMSGIRGKMCREREQPLTVKDCLECAFKKGLPRREHWAHVGCTFKAPPFACHIPRVPMKGEVIETKSLDEAFKLLIKQPVGARLHVFSPDLDNVGEGVYEGLSSLSRKESRYVGLRDVIIVAVNKSEGKTVATVKICYKKKTSFVKVCLSRMFVQLGGGEESQVKEPTGLLVDFCIPRLSIN.

It belongs to the heat induced plant HTT protein family. Expressed ubiquitously, including in seedlings, leaves, stems, inflorescences and siliques.

It localises to the cytoplasm. It is found in the nucleus. Its function is as follows. Mediates both basal and acquired thermotolerance via HSFA1s-directed pathways (e.g. HSFA1A, HSFA1B, and HSFA1D). Triggers the expression of HSFA1A and HSFA1B. This is Protein HEAT-INDUCED TAS1 TARGET 2 from Arabidopsis thaliana (Mouse-ear cress).